The chain runs to 138 residues: Basic phospholipase A2 DAV-N6 (138 aa).

The signal sequence occupies residues 1–16 (MRTLWIVAVLLVSVEG). 7 cysteine pairs are disulfide-bonded: Cys42–Cys131, Cys44–Cys60, Cys59–Cys111, Cys65–Cys138, Cys66–Cys104, Cys73–Cys97, and Cys91–Cys102. Ca(2+)-binding residues include Tyr43, Gly45, and Gly47. His63 is a catalytic residue. Asp64 is a binding site for Ca(2+). Asp105 is a catalytic residue.

Requires Ca(2+) as cofactor. As to expression, expressed by the venom gland.

It localises to the secreted. It carries out the reaction a 1,2-diacyl-sn-glycero-3-phosphocholine + H2O = a 1-acyl-sn-glycero-3-phosphocholine + a fatty acid + H(+). Its function is as follows. Snake venom phospholipase A2 (PLA2) that inhibits neuromuscular transmission by blocking acetylcholine release from the nerve termini. PLA2 catalyzes the calcium-dependent hydrolysis of the 2-acyl groups in 3-sn-phosphoglycerides. This chain is Basic phospholipase A2 DAV-N6, found in Deinagkistrodon acutus (Hundred-pace snake).